The primary structure comprises 837 residues: MASDVVARTRSSGVTFTPPTTHDMVRSLFDPTVRKSFLEICITLALLSDFVFCYWGLQRFGLTSMKKAFLAQYLFWRLCYNLGIGVALHLQSRYETWTNYAKRNHVFTKGNHTPLARFCQFELKTKMSEGYDMYSQPEELNVWLLFRQFVDLILMQDFCTYMIYVYLSLPAQWSAMLNWRTGLGVSMILFNIWVKVDAHRVVKDYAWYWGDFFFLQESELVFDGVFNISPHPMYSIGYMGYYGLSLICGNYHVLLVSISGHLLQFLFLKYVESPHMEITYGSESSDDNSQINSCIDDLIATKNYDYSRPLINSGFWVNNFDKLRFTDYFTVGTSLALICWLFLERPSVKLLFNLTFFTKFVTSIVVCSILYLQSSQKWFTKLYLKNGYTQVYSYQQWQFIYNFSSCLTYTLLFIQTLAKLFDDNTYIEYTQFIFGLLLCAVQTWCNAEIRSAISDFGWFYGDFFLSNYIPTKSLTSHGIYRYLNNPETILGVAGVWGTVLMTDFSWENIALACLWSGCNFIIVKFIEQPHMAKLYGDNTRVGGIEKTLQGLGPWRRMSELMDRVENVITKSLTNQQEPFDKGLEKPRKDIKSVNNHLRVRTNSQEWEEAVEDAIGNVTSKLYPDCKFEIEDLGEKSFILPRPITIRWQVPIELFDEDAWIGLYNIIQTRSNSKTTKVSSSGHWSAVSPNAYKGYESNNLAVTEFEKNDTVACGKVTFDSSLLHFKPGIYEFRYHAGNSHNVLCTSKPFELLLPNLDMETPEILNKQLLQLLTSVSAVKNGKFDSHGNRYFTTRIFQRLVKDSLGVELSTDYINRVNGDIGAISQRICHIKKVLDDLE.

Residues 1–36 are Lumenal-facing; it reads MASDVVARTRSSGVTFTPPTTHDMVRSLFDPTVRKS. A helical transmembrane segment spans residues 37–57; the sequence is FLEICITLALLSDFVFCYWGL. Over 58–67 the chain is Cytoplasmic; the sequence is QRFGLTSMKK. A helical transmembrane segment spans residues 68 to 88; sequence AFLAQYLFWRLCYNLGIGVAL. The Lumenal segment spans residues 89–148; the sequence is HLQSRYETWTNYAKRNHVFTKGNHTPLARFCQFELKTKMSEGYDMYSQPEELNVWLLFRQ. A helical membrane pass occupies residues 149–169; it reads FVDLILMQDFCTYMIYVYLSL. Over 170 to 173 the chain is Cytoplasmic; sequence PAQW. A helical membrane pass occupies residues 174-194; it reads SAMLNWRTGLGVSMILFNIWV. The Lumenal segment spans residues 195–205; the sequence is KVDAHRVVKDY. The helical transmembrane segment at 206 to 226 threads the bilayer; sequence AWYWGDFFFLQESELVFDGVF. The Cytoplasmic portion of the chain corresponds to 227–235; that stretch reads NISPHPMYS. Residues 236-256 traverse the membrane as a helical segment; that stretch reads IGYMGYYGLSLICGNYHVLLV. Topologically, residues 257-322 are lumenal; it reads SISGHLLQFL…SGFWVNNFDK (66 aa). A helical transmembrane segment spans residues 323–343; that stretch reads LRFTDYFTVGTSLALICWLFL. The Cytoplasmic segment spans residues 344-349; the sequence is ERPSVK. A helical membrane pass occupies residues 350 to 370; it reads LLFNLTFFTKFVTSIVVCSIL. At 371 to 396 the chain is on the lumenal side; sequence YLQSSQKWFTKLYLKNGYTQVYSYQQ. A helical transmembrane segment spans residues 397–417; the sequence is WQFIYNFSSCLTYTLLFIQTL. Residues 418–424 are Cytoplasmic-facing; sequence AKLFDDN. Residues 425 to 445 form a helical membrane-spanning segment; it reads TYIEYTQFIFGLLLCAVQTWC. Topologically, residues 446 to 505 are lumenal; it reads NAEIRSAISDFGWFYGDFFLSNYIPTKSLTSHGIYRYLNNPETILGVAGVWGTVLMTDFS. A helical transmembrane segment spans residues 506–526; it reads WENIALACLWSGCNFIIVKFI. Residues 527 to 837 lie on the Cytoplasmic side of the membrane; the sequence is EQPHMAKLYG…HIKKVLDDLE (311 aa).

This sequence belongs to the class VI-like SAM-binding methyltransferase superfamily. CHO2 family.

The protein resides in the endoplasmic reticulum membrane. The catalysed reaction is a 1,2-diacyl-sn-glycero-3-phosphoethanolamine + S-adenosyl-L-methionine = a 1,2-diacyl-sn-glycero-3-phospho-N-methylethanolamine + S-adenosyl-L-homocysteine + H(+). It functions in the pathway phospholipid metabolism; phosphatidylcholine biosynthesis. In terms of biological role, catalyzes the first step of the methylation pathway of phosphatidylcholine biosynthesis, the SAM-dependent methylation of phosphatidylethanolamine (PE) to phosphatidylmonomethylethanolamine (PMME). This is Phosphatidylethanolamine N-methyltransferase (CHO2) from Zygosaccharomyces rouxii (strain ATCC 2623 / CBS 732 / NBRC 1130 / NCYC 568 / NRRL Y-229).